A 271-amino-acid polypeptide reads, in one-letter code: MDNRPIGLLDSGVGGLTVARELLRQLPNEEIVYIGDTRRAPYGPRSREQIIAFTWDMVNFLLSKNVKMIVMACNTATAMTLEIVKEELDIPVIGVILPGASSAIQKTKTNKIGVIATQASIRSDEYHKTIARKSSAIEVLSLACPKFVSIVESNEMESEIAKRVVSESLAPLVGKIDTLILGCTHYPLLRSLIQETMGKEVRLIDSGAEAVRDISVLLNYFEINAHERKEYQHCFYTTAGVNSFREIAEKWLNIGHLHIEHAEIENFNKEK.

Substrate-binding positions include 10 to 11 and 42 to 43; these read DS and YG. Residue Cys-73 is the Proton donor/acceptor of the active site. Substrate is bound at residue 74–75; that stretch reads NT. Catalysis depends on Cys-183, which acts as the Proton donor/acceptor. 184-185 is a binding site for substrate; sequence TH.

This sequence belongs to the aspartate/glutamate racemases family.

The enzyme catalyses L-glutamate = D-glutamate. It participates in cell wall biogenesis; peptidoglycan biosynthesis. In terms of biological role, provides the (R)-glutamate required for cell wall biosynthesis. The chain is Glutamate racemase from Lactococcus lactis subsp. cremoris (strain SK11).